A 138-amino-acid chain; its full sequence is Small ribosomal subunit protein uS11c (138 aa).

A disordered region spans residues methionine 1–arginine 24. Positions glycine 9–arginine 24 are enriched in basic residues.

The protein belongs to the universal ribosomal protein uS11 family. In terms of assembly, part of the 30S ribosomal subunit.

It is found in the plastid. The protein localises to the chloroplast. The sequence is that of Small ribosomal subunit protein uS11c from Liriodendron tulipifera (Tuliptree).